The sequence spans 346 residues: Leucine zipper protein 2 (346 aa).

The signal sequence occupies residues 1 to 19; that stretch reads MKFSPAHYLLPLLPALVLS. Residues 16 to 211 adopt a coiled-coil conformation; the sequence is LVLSTRQDYE…QMKAMKETVQ (196 aa). The N-linked (GlcNAc...) asparagine glycan is linked to Asn133. The tract at residues 164 to 192 is leucine-zipper; sequence LRYGKKDLLFKAQQLTDLEQKLAVAKNEL. Positions 225–346 are disordered; sequence ALSLITSNPT…GMAAREEKIL (122 aa). Positions 250-261 are enriched in low complexity; sequence AAAKSKPQQSAS. The segment covering 262-283 has biased composition (polar residues); the sequence is GNNESSQVESTKEGSPSTTACD. An N-linked (GlcNAc...) asparagine glycan is attached at Asn264. The segment covering 286–298 has biased composition (basic and acidic residues); that stretch reads DEGRTCSIKHKES. Residue Asn302 is glycosylated (N-linked (GlcNAc...) asparagine).

It localises to the secreted. The polypeptide is Leucine zipper protein 2 (LUZP2) (Pongo abelii (Sumatran orangutan)).